A 631-amino-acid chain; its full sequence is Phosphomethylpyrimidine synthase (631 aa).

Substrate is bound by residues N239, M268, Y297, H333, 353-355, 394-397, and E433; these read SRG and DGLR. Residue H437 participates in Zn(2+) binding. Y460 serves as a coordination point for substrate. H501 lines the Zn(2+) pocket. Residues C581, C584, and C589 each contribute to the [4Fe-4S] cluster site.

This sequence belongs to the ThiC family. As to quaternary structure, homodimer. The cofactor is [4Fe-4S] cluster.

The catalysed reaction is 5-amino-1-(5-phospho-beta-D-ribosyl)imidazole + S-adenosyl-L-methionine = 4-amino-2-methyl-5-(phosphooxymethyl)pyrimidine + CO + 5'-deoxyadenosine + formate + L-methionine + 3 H(+). Its pathway is cofactor biosynthesis; thiamine diphosphate biosynthesis. Its function is as follows. Catalyzes the synthesis of the hydroxymethylpyrimidine phosphate (HMP-P) moiety of thiamine from aminoimidazole ribotide (AIR) in a radical S-adenosyl-L-methionine (SAM)-dependent reaction. This Escherichia coli O157:H7 protein is Phosphomethylpyrimidine synthase.